We begin with the raw amino-acid sequence, 297 residues long: Cell division protein FtsX (297 aa).

Over 1 to 21 the chain is Cytoplasmic; sequence MRFGFLLNEVLTGFRRNVTMT. Residues 22–42 traverse the membrane as a helical segment; that stretch reads IAMILTTAISVGLFGGGMLVV. Topologically, residues 43-171 are extracellular; sequence RLADSSRAIY…LFAVLDGLSN (129 aa). The helical transmembrane segment at 172–192 threads the bilayer; it reads AAFAVALVQAIGAILLIANMV. Residues 193-219 lie on the Cytoplasmic side of the membrane; it reads QVAAYTRRTEIGIMRLVGASRWYTQLP. A helical transmembrane segment spans residues 220-240; sequence FLVEAMLAATMGVGIAVAGLM. Over 241-267 the chain is Extracellular; the sequence is VVRALFLENALNQFYQANLIAKVDYAD. The chain crosses the membrane as a helical span at residues 268 to 288; it reads ILFITPWLLLLGVAMSGLTAY. At 289–297 the chain is on the cytoplasmic side; the sequence is LTLRLYVRR.

It belongs to the ABC-4 integral membrane protein family. FtsX subfamily. As to quaternary structure, forms a membrane-associated complex with FtsE.

It is found in the cell membrane. Part of the ABC transporter FtsEX involved in cellular division. The polypeptide is Cell division protein FtsX (Mycobacterium tuberculosis (strain ATCC 25177 / H37Ra)).